A 191-amino-acid polypeptide reads, in one-letter code: Protein Ves (191 aa).

It belongs to the Ves family.

This Citrobacter koseri (strain ATCC BAA-895 / CDC 4225-83 / SGSC4696) protein is Protein Ves.